The primary structure comprises 335 residues: D-alanine--D-alanine ligase (335 aa).

The ATP-grasp domain maps to 124 to 330; it reads KMWFSALGVP…FTEYLSDVIS (207 aa). ATP is bound at residue 154–209; sequence AFDTWGSVFIKAASQGSSVGCYKVDVRDNIAKVLEEAFGYAPYVVVEKTIKARELE. Residues aspartate 284, glutamate 297, and asparagine 299 each contribute to the Mg(2+) site.

This sequence belongs to the D-alanine--D-alanine ligase family. Mg(2+) serves as cofactor. The cofactor is Mn(2+).

It localises to the cytoplasm. The catalysed reaction is 2 D-alanine + ATP = D-alanyl-D-alanine + ADP + phosphate + H(+). The protein operates within cell wall biogenesis; peptidoglycan biosynthesis. Functionally, cell wall formation. The polypeptide is D-alanine--D-alanine ligase (Shewanella denitrificans (strain OS217 / ATCC BAA-1090 / DSM 15013)).